The primary structure comprises 354 residues: Peptide chain release factor 1 (354 aa).

Glutamine 231 is modified (N5-methylglutamine). Basic and acidic residues predominate over residues 284-304 (EALAKDRKEQVGSGDRSERIR). Positions 284 to 308 (EALAKDRKEQVGSGDRSERIRTYNF) are disordered.

It belongs to the prokaryotic/mitochondrial release factor family. Post-translationally, methylated by PrmC. Methylation increases the termination efficiency of RF1.

The protein resides in the cytoplasm. Peptide chain release factor 1 directs the termination of translation in response to the peptide chain termination codons UAG and UAA. The sequence is that of Peptide chain release factor 1 from Nitratiruptor sp. (strain SB155-2).